Here is a 435-residue protein sequence, read N- to C-terminus: Asparagine--tRNA ligase (435 aa).

Belongs to the class-II aminoacyl-tRNA synthetase family. In terms of assembly, homodimer.

Its subcellular location is the cytoplasm. The enzyme catalyses tRNA(Asn) + L-asparagine + ATP = L-asparaginyl-tRNA(Asn) + AMP + diphosphate + H(+). The sequence is that of Asparagine--tRNA ligase from Leptospira interrogans serogroup Icterohaemorrhagiae serovar Lai (strain 56601).